Here is a 430-residue protein sequence, read N- to C-terminus: 3-phosphoshikimate 1-carboxyvinyltransferase (430 aa).

Positions 23, 24, and 28 each coordinate 3-phosphoshikimate. Lys23 contributes to the phosphoenolpyruvate binding site. Phosphoenolpyruvate contacts are provided by Gly95 and Arg123. 3-phosphoshikimate is bound by residues Ser169, Gln171, Asp315, and Lys342. Position 171 (Gln171) interacts with phosphoenolpyruvate. The Proton acceptor role is filled by Asp315. Phosphoenolpyruvate-binding residues include Arg346 and Arg388.

This sequence belongs to the EPSP synthase family. As to quaternary structure, monomer.

The protein localises to the cytoplasm. It catalyses the reaction 3-phosphoshikimate + phosphoenolpyruvate = 5-O-(1-carboxyvinyl)-3-phosphoshikimate + phosphate. It functions in the pathway metabolic intermediate biosynthesis; chorismate biosynthesis; chorismate from D-erythrose 4-phosphate and phosphoenolpyruvate: step 6/7. In terms of biological role, catalyzes the transfer of the enolpyruvyl moiety of phosphoenolpyruvate (PEP) to the 5-hydroxyl of shikimate-3-phosphate (S3P) to produce enolpyruvyl shikimate-3-phosphate and inorganic phosphate. The sequence is that of 3-phosphoshikimate 1-carboxyvinyltransferase from Streptococcus pyogenes serotype M3 (strain ATCC BAA-595 / MGAS315).